The primary structure comprises 314 residues: tRNA dimethylallyltransferase (314 aa).

10–17 provides a ligand contact to ATP; the sequence is GPTAVGKT. Position 12-17 (12-17) interacts with substrate; sequence TAVGKT. 4 interaction with substrate tRNA regions span residues 35-38, 160-164, 239-244, and 272-279; these read DSMQ, RRVIR, QAIGYK, and KRQLTWFR.

Belongs to the IPP transferase family. Monomer. It depends on Mg(2+) as a cofactor.

The catalysed reaction is adenosine(37) in tRNA + dimethylallyl diphosphate = N(6)-dimethylallyladenosine(37) in tRNA + diphosphate. In terms of biological role, catalyzes the transfer of a dimethylallyl group onto the adenine at position 37 in tRNAs that read codons beginning with uridine, leading to the formation of N6-(dimethylallyl)adenosine (i(6)A). This Halalkalibacterium halodurans (strain ATCC BAA-125 / DSM 18197 / FERM 7344 / JCM 9153 / C-125) (Bacillus halodurans) protein is tRNA dimethylallyltransferase (miaA).